The following is a 300-amino-acid chain: UPF0761 membrane protein Patl_3954 (300 aa).

A run of 6 helical transmembrane segments spans residues 46-66, 103-123, 138-158, 184-204, 214-234, and 248-268; these read LLSL…FPAF, MGAI…SNID, IIFT…LIGL, MLKI…YMIV, ALVG…GFSF, and AMAV…VVLL.

It belongs to the UPF0761 family.

The protein resides in the cell inner membrane. The polypeptide is UPF0761 membrane protein Patl_3954 (Pseudoalteromonas atlantica (strain T6c / ATCC BAA-1087)).